We begin with the raw amino-acid sequence, 458 residues long: Elongation factor 1-alpha (458 aa).

At Gly-2 the chain carries N,N,N-trimethylglycine; by EFM7. Lys-3 bears the N6,N6-dimethyllysine; by EFM7; alternate mark. Lys-3 bears the N6-methyllysine; by EFM7; alternate mark. The tr-type G domain occupies 5–240; the sequence is KSHINVVVIG…DAIEQPSRPT (236 aa). The interval 14-21 is G1; the sequence is GHVDSGKS. Ser-18 carries the post-translational modification Phosphoserine. GTP is bound by residues Ser-21 and Thr-22. The residue at position 30 (Lys-30) is an N6-methyllysine; by EFM1. The tract at residues 70-74 is G2; that stretch reads GITID. The residue at position 72 (Thr-72) is a Phosphothreonine. Residue Lys-79 is modified to N6,N6,N6-trimethyllysine; by EFM5. Thr-82 carries the post-translational modification Phosphothreonine. The interval 91–94 is G3; it reads DAPG. Residues Asn-153, Lys-154, and Asp-156 each coordinate GTP. The interval 153–156 is G4; that stretch reads NKMD. A Phosphoserine modification is found at Ser-163. 3 residues coordinate GTP: Ser-192, Gly-193, and Trp-194. A G5 region spans residues 192 to 194; it reads SGW. Glycyl lysine isopeptide (Lys-Gly) (interchain with G-Cter in ubiquitin) cross-links involve residues Lys-224, Lys-242, and Lys-253. Phosphothreonine is present on Thr-259. Lys-271 participates in a covalent cross-link: Glycyl lysine isopeptide (Lys-Gly) (interchain with G-Cter in ubiquitin). Ser-289 carries the phosphoserine modification. The residue at position 316 (Lys-316) is an N6,N6-dimethyllysine; by EFM4; alternate. An N6-methyllysine; by EFM4; alternate modification is found at Lys-316. An N6-methyllysine; by EFM6 modification is found at Lys-390. A Glycyl lysine isopeptide (Lys-Gly) (interchain with G-Cter in ubiquitin) cross-link involves residue Lys-393. The residue at position 414 (Ser-414) is a Phosphoserine. Thr-430 carries the post-translational modification Phosphothreonine. Lys-437 is covalently cross-linked (Glycyl lysine isopeptide (Lys-Gly) (interchain with G-Cter in ubiquitin)). Lys-458 carries the post-translational modification Lysine methyl ester.

It belongs to the TRAFAC class translation factor GTPase superfamily. Classic translation factor GTPase family. EF-Tu/EF-1A subfamily. The eukaryotic elongation factor 1 complex (eEF1) is probably a heterohexamer. Two trimeric complexes, each composed of eEF1A (TEF1 or TEF2), eEF1Balpha (EFB1) and eEF1Bgamma (CAM1 or TEF4), are probably dimerized via the eF1Bgamma subunits. Interacts with eEF1Balpha; the interaction is direct. Interacts with GCN2 (via C-terminus); this interaction is direct, occurs in amino acid-repleted cells, may be stabilized in a ribosome-dependent manner, reduces GCN2-mediated eIF-2-alpha phosphorylation and is lost in amino acid-starved cells and by uncharged tRNAs. Interacts with CEX1. Interacts with elongation factor 3 (YEF3 or HEF3). Interacts with NAP1. Interacts with SRV2. Interacts with chaperone ZPR1; the interaction is required for its proper folding. Binds to actin and forms a ternary complex with BNI1 and profilin. Interacts with the proteasome, probably via RPT1. Associates with ribosomes. S-thiolated in response to oxidative stress, probably inhibiting the protein and causing a reduction in protein synthesis. Post-translationally, glutaminylated at Glu-45. An L-glutamine is linked to Glu-45 via the alpha amino group. This glutaminylation is yeast-specific and not essential for the normal functions of eEF1A. However, eEF1A glutaminylation slightly reduced growth under antibiotic-induced translational stress conditions.

It is found in the cytoplasm. The protein resides in the cytoskeleton. The protein operates within protein biosynthesis; polypeptide chain elongation. Its activity is regulated as follows. Inhibited by narciclasine. GTP-binding component of the eukaryotic elongation factor 1 complex (eEF1). In its active GTP-bound form, binds to and delivers aminoacyl-tRNA to the A-site of ribosomes during protein biosynthesis. In the presence of a correct codon-anticodon match between the aminoacyl-tRNA and the A-site codon of the ribosome-bound mRNA, the ribosome acts as a GTPase activator and the GTP is hydrolyzed. The inactive GDP-bound form leaves the ribosome and must be recycled by its guanine nucleotide exchange factor (GEF) (eEF1B subcomplex) before binding another molecule of aminoacyl-tRNA. Required for nuclear export of aminoacyl-tRNAs. May also be involved in translational quality control by targeting cotranslationally damaged proteins to the proteasome. Also exhibits actin filament-binding and -bundling activities and is involved in cytoskeleton organization. Plays a role as a negative regulator of GCN2 kinase activity by inhibiting GCN2-mediated eIF-2-alpha phosphorylation in amino acid-repleted cells. This chain is Elongation factor 1-alpha (TEF1), found in Saccharomyces cerevisiae (strain ATCC 204508 / S288c) (Baker's yeast).